We begin with the raw amino-acid sequence, 386 residues long: Methionine aminopeptidase 1 (386 aa).

Ala2 bears the N-acetylalanine mark. Residues 6–59 form a C6H2-type zinc finger; the sequence is TRVCETDGCSSEAKLQCPTCIKLGIQGSYFCSQECFKGSWATHKLLHKKAKDEK. Residues Cys9, Cys14, Cys22, Cys25, Cys36, Cys40, His48, and His52 each coordinate Zn(2+). His203 serves as a coordination point for a protein. Residues Asp220, Asp231, and His294 each coordinate Zn(2+). His301 contacts a protein. Zn(2+)-binding residues include Glu327 and Glu358.

The protein belongs to the peptidase M24A family. Methionine aminopeptidase type 1 subfamily. In terms of assembly, associates with the 60S ribosomal subunit of the 80S translational complex. Requires Zn(2+) as cofactor. Co(2+) serves as cofactor. The cofactor is Mn(2+). It depends on Fe(2+) as a cofactor.

It is found in the cytoplasm. The enzyme catalyses Release of N-terminal amino acids, preferentially methionine, from peptides and arylamides.. Cotranslationally removes the N-terminal methionine from nascent proteins. The N-terminal methionine is often cleaved when the second residue in the primary sequence is small and uncharged (Met-Ala-, Cys, Gly, Pro, Ser, Thr, or Val). Required for normal progression through the cell cycle. The polypeptide is Methionine aminopeptidase 1 (METAP1) (Homo sapiens (Human)).